Here is a 204-residue protein sequence, read N- to C-terminus: Methylthioribulose-1-phosphate dehydratase (204 aa).

Zn(2+) is bound by residues H94 and H96.

Belongs to the aldolase class II family. MtnB subfamily. The cofactor is Zn(2+).

It carries out the reaction 5-(methylsulfanyl)-D-ribulose 1-phosphate = 5-methylsulfanyl-2,3-dioxopentyl phosphate + H2O. The protein operates within amino-acid biosynthesis; L-methionine biosynthesis via salvage pathway; L-methionine from S-methyl-5-thio-alpha-D-ribose 1-phosphate: step 2/6. In terms of biological role, catalyzes the dehydration of methylthioribulose-1-phosphate (MTRu-1-P) into 2,3-diketo-5-methylthiopentyl-1-phosphate (DK-MTP-1-P). The sequence is that of Methylthioribulose-1-phosphate dehydratase from Pseudomonas syringae pv. tomato (strain ATCC BAA-871 / DC3000).